The chain runs to 403 residues: Palmitoyltransferase ZDHHC23-A (403 aa).

Over 1–70 (MKRERFKPPE…ADRLGVSCCT (70 aa)) the chain is Cytoplasmic. Residues 71–91 (VGPLRLELSVLPPMVLIPGLL) traverse the membrane as a helical segment. Arg92 is a topological domain (lumenal). A helical membrane pass occupies residues 93–113 (VAAINCLLGVIILTALPLLVL). Topologically, residues 114–125 (WYYYMTHRRKRR) are cytoplasmic. A helical transmembrane segment spans residues 126-146 (TLFFLSLALFSLAYMYYLFLT). The Lumenal portion of the chain corresponds to 147-153 (EIVPRGD). A helical membrane pass occupies residues 154 to 174 (VTHLQVVTATTGMMLTLISLV). Topologically, residues 175 to 268 (RTKQGPGFVK…NSCVGQANHR (94 aa)) are cytoplasmic. One can recognise a DHHC domain in the interval 225 to 275 (KKCPVCQLVRPPRAGHCRICGACVLRMDHHCVWINSCVGQANHRQFILTLL). Cys255 (S-palmitoyl cysteine intermediate) is an active-site residue. Residues 269 to 289 (QFILTLLLFLLTSFYGISLVL) traverse the membrane as a helical segment. Residues 290–319 (RSICPKQSLFTAMLYCPGVYNQYSTALCFT) are Lumenal-facing. A helical transmembrane segment spans residues 320–340 (CVWYSVIITGGLLHLFILQII). The Cytoplasmic segment spans residues 341 to 403 (NVSCNVTERE…GSSLNLTDMV (63 aa)).

It belongs to the DHHC palmitoyltransferase family.

The protein resides in the golgi apparatus membrane. It is found in the golgi apparatus. Its subcellular location is the trans-Golgi network membrane. It catalyses the reaction L-cysteinyl-[protein] + hexadecanoyl-CoA = S-hexadecanoyl-L-cysteinyl-[protein] + CoA. Functionally, palmitoyltransferase that could catalyze the addition of palmitate onto various protein substrates and be involved in a variety of cellular processes. The sequence is that of Palmitoyltransferase ZDHHC23-A (zdhhc23a) from Danio rerio (Zebrafish).